We begin with the raw amino-acid sequence, 45 residues long: Photosystem II reaction center protein K (45 aa).

Positions 1–8 (MELMLLFA) are excised as a propeptide. Residues 24-44 (LPVIPVLFLALAFVWQASVGF) form a helical membrane-spanning segment.

Belongs to the PsbK family. PSII is composed of 1 copy each of membrane proteins PsbA, PsbB, PsbC, PsbD, PsbE, PsbF, PsbH, PsbI, PsbJ, PsbK, PsbL, PsbM, PsbT, PsbX, PsbY, PsbZ, Psb30/Ycf12, peripheral proteins PsbO, CyanoQ (PsbQ), PsbU, PsbV and a large number of cofactors. It forms dimeric complexes.

It is found in the cellular thylakoid membrane. In terms of biological role, one of the components of the core complex of photosystem II (PSII). PSII is a light-driven water:plastoquinone oxidoreductase that uses light energy to abstract electrons from H(2)O, generating O(2) and a proton gradient subsequently used for ATP formation. It consists of a core antenna complex that captures photons, and an electron transfer chain that converts photonic excitation into a charge separation. This chain is Photosystem II reaction center protein K, found in Cyanothece sp. (strain PCC 7425 / ATCC 29141).